Here is a 445-residue protein sequence, read N- to C-terminus: Chromosome partition protein MukF (445 aa).

The leucine-zipper stretch occupies residues 213 to 241 (LSETSATLRELQDTLQAAGDELQTQILDI).

This sequence belongs to the MukF family. In terms of assembly, interacts, and probably forms a ternary complex, with MukE and MukB via its C-terminal region. The complex formation is stimulated by calcium or magnesium. It is required for an interaction between MukE and MukB.

Its subcellular location is the cytoplasm. The protein resides in the nucleoid. Functionally, involved in chromosome condensation, segregation and cell cycle progression. May participate in facilitating chromosome segregation by condensation DNA from both sides of a centrally located replisome during cell division. Not required for mini-F plasmid partitioning. Probably acts via its interaction with MukB and MukE. Overexpression results in anucleate cells. It has a calcium binding activity. This Vibrio cholerae serotype O1 (strain ATCC 39315 / El Tor Inaba N16961) protein is Chromosome partition protein MukF.